The chain runs to 338 residues: UPF0252 protein PF1496 (338 aa).

The chain crosses the membrane as a helical span at residues 100–120 (ILSMLFLVFILFPAFTSHIWS).

This sequence belongs to the UPF0252 family.

It localises to the membrane. The polypeptide is UPF0252 protein PF1496 (Pyrococcus furiosus (strain ATCC 43587 / DSM 3638 / JCM 8422 / Vc1)).